We begin with the raw amino-acid sequence, 441 residues long: Mitochondrial distribution and morphology protein 12 (441 aa).

One can recognise an SMP-LTD domain in the interval 1-441; the sequence is MSIDIDWERA…VYPSFWTFLV (441 aa). The tract at residues 180–289 is disordered; sequence TPLRAVTRGN…SGTPPRRMRE (110 aa). 2 stretches are compositionally biased toward polar residues: residues 226-245 and 253-263; these read SRPSTANTGNTLFSRGSVST and SSQTVLANNPG.

Belongs to the MDM12 family. In terms of assembly, component of the ER-mitochondria encounter structure (ERMES) or MDM complex, composed of MMM1, MDM10, MDM12 and MDM34. An MMM1 homodimer associates with one molecule of MDM12 on each side in a pairwise head-to-tail manner, and the SMP-LTD domains of MMM1 and MDM12 generate a continuous hydrophobic tunnel for phospholipid trafficking.

It is found in the mitochondrion outer membrane. The protein localises to the endoplasmic reticulum membrane. In terms of biological role, component of the ERMES/MDM complex, which serves as a molecular tether to connect the endoplasmic reticulum (ER) and mitochondria. Components of this complex are involved in the control of mitochondrial shape and protein biogenesis, and function in nonvesicular lipid trafficking between the ER and mitochondria. MDM12 is required for the interaction of the ER-resident membrane protein MMM1 and the outer mitochondrial membrane-resident beta-barrel protein MDM10. The MDM12-MMM1 subcomplex functions in the major beta-barrel assembly pathway that is responsible for biogenesis of all mitochondrial outer membrane beta-barrel proteins, and acts in a late step after the SAM complex. The MDM10-MDM12-MMM1 subcomplex further acts in the TOM40-specific pathway after the action of the MDM12-MMM1 complex. Essential for establishing and maintaining the structure of mitochondria and maintenance of mtDNA nucleoids. The polypeptide is Mitochondrial distribution and morphology protein 12 (Paracoccidioides brasiliensis (strain Pb18)).